We begin with the raw amino-acid sequence, 66 residues long: ATP synthase F(0) complex subunit 8 (66 aa).

An N-formylmethionine modification is found at Met1. A helical membrane pass occupies residues 8–24 (TWLTMILSMFLTLFIIF). Lys54 bears the N6-acetyllysine; alternate mark. The residue at position 54 (Lys54) is an N6-succinyllysine; alternate. Lys57 is modified (N6-acetyllysine).

This sequence belongs to the ATPase protein 8 family. Component of the ATP synthase complex composed at least of ATP5F1A/subunit alpha, ATP5F1B/subunit beta, ATP5MC1/subunit c (homooctomer), MT-ATP6/subunit a, MT-ATP8/subunit 8, ATP5ME/subunit e, ATP5MF/subunit f, ATP5MG/subunit g, ATP5MK/subunit k, ATP5MJ/subunit j, ATP5F1C/subunit gamma, ATP5F1D/subunit delta, ATP5F1E/subunit epsilon, ATP5PF/subunit F6, ATP5PB/subunit b, ATP5PD/subunit d, ATP5PO/subunit OSCP. ATP synthase complex consists of a soluble F(1) head domain (subunits alpha(3) and beta(3)) - the catalytic core - and a membrane F(0) domain - the membrane proton channel (subunits c, a, 8, e, f, g, k and j). These two domains are linked by a central stalk (subunits gamma, delta, and epsilon) rotating inside the F1 region and a stationary peripheral stalk (subunits F6, b, d, and OSCP). Interacts with PRICKLE3.

Its subcellular location is the mitochondrion membrane. Its function is as follows. Subunit 8, of the mitochondrial membrane ATP synthase complex (F(1)F(0) ATP synthase or Complex V) that produces ATP from ADP in the presence of a proton gradient across the membrane which is generated by electron transport complexes of the respiratory chain. ATP synthase complex consist of a soluble F(1) head domain - the catalytic core - and a membrane F(1) domain - the membrane proton channel. These two domains are linked by a central stalk rotating inside the F(1) region and a stationary peripheral stalk. During catalysis, ATP synthesis in the catalytic domain of F(1) is coupled via a rotary mechanism of the central stalk subunits to proton translocation. In vivo, can only synthesize ATP although its ATP hydrolase activity can be activated artificially in vitro. Part of the complex F(0) domain. This Bos taurus (Bovine) protein is ATP synthase F(0) complex subunit 8.